Here is a 124-residue protein sequence, read N- to C-terminus: uncharacterized protein (124 aa).

The chain crosses the membrane as a helical span at residues 83–100; that stretch reads VTCFSLYTICYRIVLIWA.

The protein localises to the membrane. This is an uncharacterized protein from Saccharomyces cerevisiae (strain ATCC 204508 / S288c) (Baker's yeast).